We begin with the raw amino-acid sequence, 297 residues long: Nucleotide-binding protein BTH_I0482 (297 aa).

8-15 (GISGSGKS) contributes to the ATP binding site. Position 57 to 60 (57 to 60 (DARS)) interacts with GTP.

This sequence belongs to the RapZ-like family.

Its function is as follows. Displays ATPase and GTPase activities. The chain is Nucleotide-binding protein BTH_I0482 from Burkholderia thailandensis (strain ATCC 700388 / DSM 13276 / CCUG 48851 / CIP 106301 / E264).